Consider the following 92-residue polypeptide: Large ribosomal subunit protein eL31 (92 aa).

The protein belongs to the eukaryotic ribosomal protein eL31 family.

In Haloquadratum walsbyi (strain DSM 16790 / HBSQ001), this protein is Large ribosomal subunit protein eL31.